The sequence spans 229 residues: Large ribosomal subunit protein uL1 (229 aa).

The protein belongs to the universal ribosomal protein uL1 family. In terms of assembly, part of the 50S ribosomal subunit.

Binds directly to 23S rRNA. The L1 stalk is quite mobile in the ribosome, and is involved in E site tRNA release. In terms of biological role, protein L1 is also a translational repressor protein, it controls the translation of the L11 operon by binding to its mRNA. This chain is Large ribosomal subunit protein uL1, found in Streptococcus suis (strain 98HAH33).